Here is a 147-residue protein sequence, read N- to C-terminus: Protein phosphatase 1 regulatory subunit 14A (147 aa).

The segment covering methionine 1 to leucine 11 has biased composition (basic residues). The segment at methionine 1 to valine 37 is disordered. Residue serine 26 is modified to Phosphoserine. The tract at residues alanine 35 to lysine 120 is inhibitory. A Phosphothreonine modification is found at threonine 38. The interval leucine 118–proline 147 is disordered. Phosphoserine occurs at positions 128, 134, and 136.

The protein belongs to the PP1 inhibitor family.

Its subcellular location is the cytoplasm. Inhibitor of PPP1CA. Has over 1000-fold higher inhibitory activity when phosphorylated, creating a molecular switch for regulating the phosphorylation status of PPP1CA substrates and smooth muscle contraction. This chain is Protein phosphatase 1 regulatory subunit 14A (Ppp1r14a), found in Rattus norvegicus (Rat).